Here is a 402-residue protein sequence, read N- to C-terminus: tRNA pseudouridine synthase Pus10 (402 aa).

The region spanning 37-159 is the THUMP domain; it reads RLRGERLVEK…QIRVHVQINP (123 aa). The Nucleophile role is filled by aspartate 228. Residues tyrosine 296 and tyrosine 364 each contribute to the substrate site.

This sequence belongs to the pseudouridine synthase Pus10 family.

It catalyses the reaction uridine(54) in tRNA = pseudouridine(54) in tRNA. The enzyme catalyses uridine(55) in tRNA = pseudouridine(55) in tRNA. In terms of biological role, responsible for synthesis of pseudouridine from uracil-54 and uracil-55 in the psi GC loop of transfer RNAs. The protein is tRNA pseudouridine synthase Pus10 of Methanothermobacter marburgensis (strain ATCC BAA-927 / DSM 2133 / JCM 14651 / NBRC 100331 / OCM 82 / Marburg) (Methanobacterium thermoautotrophicum).